A 612-amino-acid polypeptide reads, in one-letter code: UvrABC system protein C (612 aa).

Positions 21-99 (KLPGVYQMYD…IKSQKPPFNI (79 aa)) constitute a GIY-YIG domain. The 36-residue stretch at 209–244 (EVLQQELQVEMEQASQALDFERAVVVRDQITDLRQV) folds into the UVR domain.

It belongs to the UvrC family. As to quaternary structure, interacts with UvrB in an incision complex.

The protein resides in the cytoplasm. The UvrABC repair system catalyzes the recognition and processing of DNA lesions. UvrC both incises the 5' and 3' sides of the lesion. The N-terminal half is responsible for the 3' incision and the C-terminal half is responsible for the 5' incision. This Saccharophagus degradans (strain 2-40 / ATCC 43961 / DSM 17024) protein is UvrABC system protein C.